Reading from the N-terminus, the 55-residue chain is uncharacterized protein (55 aa).

The next 2 helical transmembrane spans lie at 2 to 19 (VIGL…SFIA) and 24 to 46 (LLSI…FRYF).

It is found in the cell membrane. This is an uncharacterized protein from Alkalihalophilus pseudofirmus (strain ATCC BAA-2126 / JCM 17055 / OF4) (Bacillus pseudofirmus).